Reading from the N-terminus, the 208-residue chain is Small ribosomal subunit protein uS4 (208 aa).

Residues 98-161 (RRLDNVIYRL…RKMPVIAEAQ (64 aa)) enclose the S4 RNA-binding domain.

This sequence belongs to the universal ribosomal protein uS4 family. Part of the 30S ribosomal subunit. Contacts protein S5. The interaction surface between S4 and S5 is involved in control of translational fidelity.

One of the primary rRNA binding proteins, it binds directly to 16S rRNA where it nucleates assembly of the body of the 30S subunit. In terms of biological role, with S5 and S12 plays an important role in translational accuracy. This is Small ribosomal subunit protein uS4 from Oleidesulfovibrio alaskensis (strain ATCC BAA-1058 / DSM 17464 / G20) (Desulfovibrio alaskensis).